A 146-amino-acid polypeptide reads, in one-letter code: D-aminoacyl-tRNA deacylase (146 aa).

A Gly-cisPro motif, important for rejection of L-amino acids motif is present at residues 137-138 (GP).

The protein belongs to the DTD family. In terms of assembly, homodimer.

It localises to the cytoplasm. The enzyme catalyses glycyl-tRNA(Ala) + H2O = tRNA(Ala) + glycine + H(+). It carries out the reaction a D-aminoacyl-tRNA + H2O = a tRNA + a D-alpha-amino acid + H(+). Functionally, an aminoacyl-tRNA editing enzyme that deacylates mischarged D-aminoacyl-tRNAs. Also deacylates mischarged glycyl-tRNA(Ala), protecting cells against glycine mischarging by AlaRS. Acts via tRNA-based rather than protein-based catalysis; rejects L-amino acids rather than detecting D-amino acids in the active site. By recycling D-aminoacyl-tRNA to D-amino acids and free tRNA molecules, this enzyme counteracts the toxicity associated with the formation of D-aminoacyl-tRNA entities in vivo and helps enforce protein L-homochirality. The chain is D-aminoacyl-tRNA deacylase from Bacillus cereus (strain G9842).